The sequence spans 466 residues: Cysteine--tRNA ligase (466 aa).

C29 serves as a coordination point for Zn(2+). Residues 31-41 (ATVQAAPHIGH) carry the 'HIGH' region motif. Zn(2+)-binding residues include C208, H233, and E237. The 'KMSKS' region motif lies at 264–268 (KMSKS). K267 is an ATP binding site.

It belongs to the class-I aminoacyl-tRNA synthetase family. In terms of assembly, monomer. Requires Zn(2+) as cofactor.

It localises to the cytoplasm. The enzyme catalyses tRNA(Cys) + L-cysteine + ATP = L-cysteinyl-tRNA(Cys) + AMP + diphosphate. The sequence is that of Cysteine--tRNA ligase from Streptomyces griseus subsp. griseus (strain JCM 4626 / CBS 651.72 / NBRC 13350 / KCC S-0626 / ISP 5235).